Here is an 892-residue protein sequence, read N- to C-terminus: Translation initiation factor IF-2 (892 aa).

The segment at 66–305 is disordered; sequence TRSTLNIPGT…SLQQGFQKPA (240 aa). The span at 68–82 shows a compositional bias: polar residues; that stretch reads STLNIPGTGGKSKSV. Composition is skewed to basic and acidic residues over residues 93–159 and 166–216; these read VKRD…KDKV and DMTK…EENK. Positions 254-269 are enriched in basic residues; sequence GRGRNAKAARPAKKGK. A compositionally biased stretch (basic and acidic residues) spans 270 to 282; sequence HAESKADREEARA. Positions 391 to 560 constitute a tr-type G domain; the sequence is PRAPVVTIMG…LLQAEVLELK (170 aa). The G1 stretch occupies residues 400–407; that stretch reads GHVDHGKT. Residue 400-407 coordinates GTP; the sequence is GHVDHGKT. The interval 425-429 is G2; it reads GITQH. The interval 446–449 is G3; sequence DTPG. GTP contacts are provided by residues 446–450 and 500–503; these read DTPGH and NKID. The G4 stretch occupies residues 500-503; the sequence is NKID. Positions 536–538 are G5; the sequence is SAK.

Belongs to the TRAFAC class translation factor GTPase superfamily. Classic translation factor GTPase family. IF-2 subfamily.

It localises to the cytoplasm. One of the essential components for the initiation of protein synthesis. Protects formylmethionyl-tRNA from spontaneous hydrolysis and promotes its binding to the 30S ribosomal subunits. Also involved in the hydrolysis of GTP during the formation of the 70S ribosomal complex. This is Translation initiation factor IF-2 from Salmonella typhi.